The sequence spans 212 residues: Ribosomal RNA large subunit methyltransferase E (212 aa).

Residues G57, W59, D77, D93, and D122 each coordinate S-adenosyl-L-methionine. The Proton acceptor role is filled by K162.

It belongs to the class I-like SAM-binding methyltransferase superfamily. RNA methyltransferase RlmE family.

The protein resides in the cytoplasm. It catalyses the reaction uridine(2552) in 23S rRNA + S-adenosyl-L-methionine = 2'-O-methyluridine(2552) in 23S rRNA + S-adenosyl-L-homocysteine + H(+). Specifically methylates the uridine in position 2552 of 23S rRNA at the 2'-O position of the ribose in the fully assembled 50S ribosomal subunit. In Coxiella burnetii (strain RSA 331 / Henzerling II), this protein is Ribosomal RNA large subunit methyltransferase E.